Here is an 845-residue protein sequence, read N- to C-terminus: Protein translocase subunit SecA (845 aa).

ATP contacts are provided by residues Gln88, 106–110 (GEGKT), and Asp495. The segment at 804–838 (SNRANRPQKKAKRQPIVKPDKPGRNDPCPCGSGKK) is disordered. Over residues 809–818 (RPQKKAKRQP) the composition is skewed to basic residues. Zn(2+)-binding residues include Cys831, Cys833, Cys842, and Cys843.

This sequence belongs to the SecA family. Monomer and homodimer. Part of the essential Sec protein translocation apparatus which comprises SecA, SecYEG and auxiliary proteins SecDF. Other proteins may also be involved. It depends on Zn(2+) as a cofactor.

Its subcellular location is the cell inner membrane. The protein localises to the cytoplasm. The enzyme catalyses ATP + H2O + cellular proteinSide 1 = ADP + phosphate + cellular proteinSide 2.. Its function is as follows. Part of the Sec protein translocase complex. Interacts with the SecYEG preprotein conducting channel. Has a central role in coupling the hydrolysis of ATP to the transfer of proteins into and across the cell membrane, serving as an ATP-driven molecular motor driving the stepwise translocation of polypeptide chains across the membrane. In Halothermothrix orenii (strain H 168 / OCM 544 / DSM 9562), this protein is Protein translocase subunit SecA.